Here is a 537-residue protein sequence, read N- to C-terminus: MVHFIFVTGGVVSSLGKGLTAASLAMLLQAKGFRVSVRKLDPYLNIDPGTMNPHEHGEVYVTDDGAETDLDLGHYERFTGVSACKFDSITTGAIYSKLLKDERLGNYAGVTVQVIPHVTNIIKDFILSNTKGVDFIICEIGGTVGDIEGLPFFEAIRQIGNQLKSENCLFIHLTLLPYVKTARELKIKPTQHSVKALRAIGISPNILVCRAERHISKGAIDKISLLCNIKSEYVVPAIDQKNIYLVPIAYHNSGLDNKVLKFFNINIMPSKLDKWYDIINRLKDSNSKVRIAIIAKYHKLKDAYKSVIEALNHAGIYYKYKIDLVWTNAENLTEESINKKLLDIDGILVPGGFGERATKGKIIAIKYARTNNIPFFGICFGMQLATIEIAQNLIGIKDAVTEEFKVDGTKIIEKINKNCEDSKITIENVKKTMRLGSYPCSLVANTIAANAYKSLEINERHRHRYKFNNEFQNIFEKHGIVFSGFSKDEEIVEIIELPLLRWFVGVQFHPEFKSKPFEAHPLFIQFIKAAIEYNKCN.

An amidoligase domain region spans residues 1–265 (MVHFIFVTGG…DNKVLKFFNI (265 aa)). Serine 13 is a binding site for CTP. Residue serine 13 participates in UTP binding. Residues 14 to 19 (SLGKGL) and aspartate 71 contribute to the ATP site. Positions 71 and 139 each coordinate Mg(2+). CTP contacts are provided by residues 146–148 (DIE) and lysine 222. A UTP-binding site is contributed by lysine 222. The region spanning 290–536 (RIAIIAKYHK…IKAAIEYNKC (247 aa)) is the Glutamine amidotransferase type-1 domain. An L-glutamine-binding site is contributed by glycine 352. The active-site Nucleophile; for glutamine hydrolysis is the cysteine 379. Residues 380-383 (FGMQ), glutamate 403, and arginine 464 each bind L-glutamine. Active-site residues include histidine 509 and glutamate 511.

Belongs to the CTP synthase family. In terms of assembly, homotetramer.

The enzyme catalyses UTP + L-glutamine + ATP + H2O = CTP + L-glutamate + ADP + phosphate + 2 H(+). The catalysed reaction is L-glutamine + H2O = L-glutamate + NH4(+). It carries out the reaction UTP + NH4(+) + ATP = CTP + ADP + phosphate + 2 H(+). Its pathway is pyrimidine metabolism; CTP biosynthesis via de novo pathway; CTP from UDP: step 2/2. With respect to regulation, allosterically activated by GTP, when glutamine is the substrate; GTP has no effect on the reaction when ammonia is the substrate. The allosteric effector GTP functions by stabilizing the protein conformation that binds the tetrahedral intermediate(s) formed during glutamine hydrolysis. Inhibited by the product CTP, via allosteric rather than competitive inhibition. Catalyzes the ATP-dependent amination of UTP to CTP with either L-glutamine or ammonia as the source of nitrogen. Regulates intracellular CTP levels through interactions with the four ribonucleotide triphosphates. The chain is CTP synthase from Rickettsia rickettsii (strain Iowa).